A 409-amino-acid polypeptide reads, in one-letter code: Terpredoxin reductase (409 aa).

Position 7–38 (7–38) interacts with FAD; the sequence is TTVIVGAGHAGTAAAFFLREFGYHGRVLLLSA. 151–159 lines the NAD(+) pocket; that stretch reads GGGFIGLEI.

The cofactor is FAD.

The oxidation of alpha-terpineol by cytochrome p450-TERP requires the participation of a flavoprotein, terpredoxin reductase, and an iron-sulfur protein, terpredoxin, to mediate the transfer of electrons from NADH to P450 for oxygen activation. The polypeptide is Terpredoxin reductase (terPA) (Pseudomonas sp).